The chain runs to 267 residues: Phosphoethanolamine/phosphocholine phosphatase (267 aa).

The Nucleophile role is filled by Asp-32. Mg(2+) contacts are provided by Asp-32 and Asp-34. Asp-34 functions as the Proton donor in the catalytic mechanism. Residues Asp-43 and Asp-123 each contribute to the substrate site. Position 203 (Asp-203) interacts with Mg(2+).

The protein belongs to the HAD-like hydrolase superfamily. PHOSPHO family. Requires Mg(2+) as cofactor. In terms of tissue distribution, expressed at sites of mineralization in bone and cartilage. Highly expressed in osteoblast cell line SaOS-2 which produces a mineralized matrix, but not in MG-63 cell line, which do not mineralize.

The protein localises to the extracellular vesicle. The enzyme catalyses phosphoethanolamine + H2O = ethanolamine + phosphate. It carries out the reaction phosphocholine + H2O = choline + phosphate. Its function is as follows. Phosphatase that has a high activity toward phosphoethanolamine (PEA) and phosphocholine (PCho). Involved in the generation of inorganic phosphate for bone mineralization. Acts in a non-redundant manner with PHOSPHO1 in skeletal mineralization: while PHOSPHO1 mediates the initiation of hydroxyapatite crystallization in the matrix vesicles (MVs), ALPL/TNAP catalyzes the spread of hydroxyapatite crystallization in the extracellular matrix. The chain is Phosphoethanolamine/phosphocholine phosphatase from Homo sapiens (Human).